The sequence spans 607 residues: Proteasome-associated ATPase (607 aa).

Positions 1–17 (MTESDRHDTPKGDRRIS) are enriched in basic and acidic residues. Residues 1 to 65 (MTESDRHDTP…GRPAADNKEL (65 aa)) are disordered. The stretch at 59–102 (AADNKELQERVDNLTARNAKLLDTLKDARQQLVALREEVDRLGQ) forms a coiled coil. ATP is bound at residue 294 to 299 (GCGKTL). The docks into pockets in the proteasome alpha-ring stretch occupies residues 606–607 (YL).

Belongs to the AAA ATPase family. As to quaternary structure, homohexamer. Assembles into a hexameric ring structure that caps the 20S proteasome core. Strongly interacts with the prokaryotic ubiquitin-like protein Pup through a hydrophobic interface; the interacting region of ARC lies in its N-terminal coiled-coil domain. There is one Pup binding site per ARC hexamer ring. Upon ATP-binding, the C-terminus of ARC interacts with the alpha-rings of the proteasome core, possibly by binding to the intersubunit pockets.

It participates in protein degradation; proteasomal Pup-dependent pathway. Its function is as follows. ATPase which is responsible for recognizing, binding, unfolding and translocation of pupylated proteins into the bacterial 20S proteasome core particle. May be essential for opening the gate of the 20S proteasome via an interaction with its C-terminus, thereby allowing substrate entry and access to the site of proteolysis. Thus, the C-termini of the proteasomal ATPase may function like a 'key in a lock' to induce gate opening and therefore regulate proteolysis. The polypeptide is Proteasome-associated ATPase (Gordonia bronchialis (strain ATCC 25592 / DSM 43247 / BCRC 13721 / JCM 3198 / KCTC 3076 / NBRC 16047 / NCTC 10667) (Rhodococcus bronchialis)).